The sequence spans 166 residues: Large ribosomal subunit protein uL10 (166 aa).

Belongs to the universal ribosomal protein uL10 family. In terms of assembly, part of the ribosomal stalk of the 50S ribosomal subunit. The N-terminus interacts with L11 and the large rRNA to form the base of the stalk. The C-terminus forms an elongated spine to which L12 dimers bind in a sequential fashion forming a multimeric L10(L12)X complex.

Functionally, forms part of the ribosomal stalk, playing a central role in the interaction of the ribosome with GTP-bound translation factors. The sequence is that of Large ribosomal subunit protein uL10 from Listeria innocua serovar 6a (strain ATCC BAA-680 / CLIP 11262).